A 261-amino-acid chain; its full sequence is UPF0246 protein azo1887 (261 aa).

It belongs to the UPF0246 family.

The chain is UPF0246 protein azo1887 from Azoarcus sp. (strain BH72).